A 237-amino-acid polypeptide reads, in one-letter code: Purine nucleoside phosphorylase DeoD-type (237 aa).

Residue histidine 4 participates in a purine D-ribonucleoside binding. Residues glycine 20, arginine 24, arginine 43, and 87–90 (RVGT) contribute to the phosphate site. Residues 179-181 (EME) and 203-204 (SD) each bind a purine D-ribonucleoside. The Proton donor role is filled by aspartate 204.

Belongs to the PNP/UDP phosphorylase family. Homohexamer; trimer of homodimers.

It carries out the reaction a purine D-ribonucleoside + phosphate = a purine nucleobase + alpha-D-ribose 1-phosphate. The enzyme catalyses a purine 2'-deoxy-D-ribonucleoside + phosphate = a purine nucleobase + 2-deoxy-alpha-D-ribose 1-phosphate. Catalyzes the reversible phosphorolytic breakdown of the N-glycosidic bond in the beta-(deoxy)ribonucleoside molecules, with the formation of the corresponding free purine bases and pentose-1-phosphate. The protein is Purine nucleoside phosphorylase DeoD-type of Streptococcus pyogenes serotype M12 (strain MGAS2096).